The sequence spans 375 residues: MATRDYYEVLEISRTADDGEIKKSYRRLAMRYHPDRNPDDASAEERFKEISAAYEVLSDPQKRQAYDRFGHAGVNGGGGGPGAGFGGGGGGFGDVFSDLFEQAFGGGFRGQDSGRGADLRYELELTLEEAALGKEVTIQIPSSATCEVCRGSGAKPGSAVEDCATCGGRGQVRMVQGFFSVTRPCPQCNGSGKVIKEPCTNCHGHGRVRRNRDLQVKVPAGVDTGDRIRLNGEGEAGERGGPAGDLYIQVRVLPHALFERDGDDLHCAVPVQFTTMAMGGELEVPTLTGRAKVQIAPGTQSGAVFRLRGKGIKGVRSKLNGDLHCQLQVEVPVHLSARQKELLEEFAREGGDNIQHPQQESWWNKAKDFFDRMGL.

The J domain maps to 5–70; the sequence is DYYEVLEISR…QKRQAYDRFG (66 aa). The segment at 133–211 adopts a CR-type zinc-finger fold; the sequence is GKEVTIQIPS…CHGHGRVRRN (79 aa). Residues Cys146, Cys149, Cys163, Cys166, Cys185, Cys188, Cys199, and Cys202 each coordinate Zn(2+). CXXCXGXG motif repeat units follow at residues 146 to 153, 163 to 170, 185 to 192, and 199 to 206; these read CEVCRGSG, CATCGGRG, CPQCNGSG, and CTNCHGHG.

Belongs to the DnaJ family. In terms of assembly, homodimer. Requires Zn(2+) as cofactor.

Its subcellular location is the cytoplasm. In terms of biological role, participates actively in the response to hyperosmotic and heat shock by preventing the aggregation of stress-denatured proteins and by disaggregating proteins, also in an autonomous, DnaK-independent fashion. Unfolded proteins bind initially to DnaJ; upon interaction with the DnaJ-bound protein, DnaK hydrolyzes its bound ATP, resulting in the formation of a stable complex. GrpE releases ADP from DnaK; ATP binding to DnaK triggers the release of the substrate protein, thus completing the reaction cycle. Several rounds of ATP-dependent interactions between DnaJ, DnaK and GrpE are required for fully efficient folding. Also involved, together with DnaK and GrpE, in the DNA replication of plasmids through activation of initiation proteins. This is Chaperone protein DnaJ from Acidithiobacillus ferrooxidans (strain ATCC 23270 / DSM 14882 / CIP 104768 / NCIMB 8455) (Ferrobacillus ferrooxidans (strain ATCC 23270)).